A 230-amino-acid chain; its full sequence is Putative N-acetylmannosamine-6-phosphate 2-epimerase (230 aa).

Belongs to the NanE family.

It carries out the reaction an N-acyl-D-glucosamine 6-phosphate = an N-acyl-D-mannosamine 6-phosphate. It participates in amino-sugar metabolism; N-acetylneuraminate degradation; D-fructose 6-phosphate from N-acetylneuraminate: step 3/5. Its function is as follows. Converts N-acetylmannosamine-6-phosphate (ManNAc-6-P) to N-acetylglucosamine-6-phosphate (GlcNAc-6-P). The sequence is that of Putative N-acetylmannosamine-6-phosphate 2-epimerase from Malacoplasma penetrans (strain HF-2) (Mycoplasma penetrans).